Reading from the N-terminus, the 199-residue chain is TATA-box-binding protein (199 aa).

Tandem repeats lie at residues 10 to 86 (IENI…VKLL) and 101 to 177 (IQNI…YNQL).

The protein belongs to the TBP family.

General factor that plays a role in the activation of archaeal genes transcribed by RNA polymerase. Binds specifically to the TATA box promoter element which lies close to the position of transcription initiation. The polypeptide is TATA-box-binding protein (Pyrobaculum aerophilum (strain ATCC 51768 / DSM 7523 / JCM 9630 / CIP 104966 / NBRC 100827 / IM2)).